The following is a 540-amino-acid chain: CTP synthase (540 aa).

An amidoligase domain region spans residues 1–273 (MNNKDLKTKF…DDFILQHFKL (273 aa)). Ser19 lines the CTP pocket. Residue Ser19 coordinates UTP. 20–25 (SLGKGI) provides a ligand contact to ATP. Residue Tyr60 participates in L-glutamine binding. Asp77 contacts ATP. The Mg(2+) site is built by Asp77 and Glu147. CTP-binding positions include 154 to 156 (DIE), 194 to 199 (KTKPTQ), and Lys230. UTP-binding positions include 194 to 199 (KTKPTQ) and Lys230. The 234-residue stretch at 306–539 (YIVLHDAYLS…VEASLLNQKN (234 aa)) folds into the Glutamine amidotransferase type-1 domain. Gly361 serves as a coordination point for L-glutamine. The active-site Nucleophile; for glutamine hydrolysis is Cys388. L-glutamine-binding positions include 389 to 392 (LGMQ), Glu412, and Arg466. Active-site residues include His512 and Glu514.

Belongs to the CTP synthase family. Homotetramer.

It catalyses the reaction UTP + L-glutamine + ATP + H2O = CTP + L-glutamate + ADP + phosphate + 2 H(+). The catalysed reaction is L-glutamine + H2O = L-glutamate + NH4(+). It carries out the reaction UTP + NH4(+) + ATP = CTP + ADP + phosphate + 2 H(+). Its pathway is pyrimidine metabolism; CTP biosynthesis via de novo pathway; CTP from UDP: step 2/2. With respect to regulation, allosterically activated by GTP, when glutamine is the substrate; GTP has no effect on the reaction when ammonia is the substrate. The allosteric effector GTP functions by stabilizing the protein conformation that binds the tetrahedral intermediate(s) formed during glutamine hydrolysis. Inhibited by the product CTP, via allosteric rather than competitive inhibition. Catalyzes the ATP-dependent amination of UTP to CTP with either L-glutamine or ammonia as the source of nitrogen. Regulates intracellular CTP levels through interactions with the four ribonucleotide triphosphates. The sequence is that of CTP synthase from Onion yellows phytoplasma (strain OY-M).